The chain runs to 354 residues: UDP-N-acetylglucosamine--N-acetylmuramyl-(pentapeptide) pyrophosphoryl-undecaprenol N-acetylglucosamine transferase (354 aa).

Residues 15–17 (TGG), N127, R163, S191, I244, 263–268 (ALTVSE), and Q288 contribute to the UDP-N-acetyl-alpha-D-glucosamine site.

The protein belongs to the glycosyltransferase 28 family. MurG subfamily.

It localises to the cell inner membrane. It catalyses the reaction di-trans,octa-cis-undecaprenyl diphospho-N-acetyl-alpha-D-muramoyl-L-alanyl-D-glutamyl-meso-2,6-diaminopimeloyl-D-alanyl-D-alanine + UDP-N-acetyl-alpha-D-glucosamine = di-trans,octa-cis-undecaprenyl diphospho-[N-acetyl-alpha-D-glucosaminyl-(1-&gt;4)]-N-acetyl-alpha-D-muramoyl-L-alanyl-D-glutamyl-meso-2,6-diaminopimeloyl-D-alanyl-D-alanine + UDP + H(+). It participates in cell wall biogenesis; peptidoglycan biosynthesis. Its function is as follows. Cell wall formation. Catalyzes the transfer of a GlcNAc subunit on undecaprenyl-pyrophosphoryl-MurNAc-pentapeptide (lipid intermediate I) to form undecaprenyl-pyrophosphoryl-MurNAc-(pentapeptide)GlcNAc (lipid intermediate II). The protein is UDP-N-acetylglucosamine--N-acetylmuramyl-(pentapeptide) pyrophosphoryl-undecaprenol N-acetylglucosamine transferase of Vibrio cholerae serotype O1 (strain ATCC 39541 / Classical Ogawa 395 / O395).